The primary structure comprises 702 residues: Ribosomal RNA large subunit methyltransferase K/L (702 aa).

Residues 43–154 form the THUMP domain; it reads LVYQSLMWSR…KETASIALDL (112 aa).

The protein belongs to the methyltransferase superfamily. RlmKL family.

Its subcellular location is the cytoplasm. It carries out the reaction guanosine(2445) in 23S rRNA + S-adenosyl-L-methionine = N(2)-methylguanosine(2445) in 23S rRNA + S-adenosyl-L-homocysteine + H(+). It catalyses the reaction guanosine(2069) in 23S rRNA + S-adenosyl-L-methionine = N(2)-methylguanosine(2069) in 23S rRNA + S-adenosyl-L-homocysteine + H(+). In terms of biological role, specifically methylates the guanine in position 2445 (m2G2445) and the guanine in position 2069 (m7G2069) of 23S rRNA. This Shigella boydii serotype 4 (strain Sb227) protein is Ribosomal RNA large subunit methyltransferase K/L.